We begin with the raw amino-acid sequence, 614 residues long: Putative binding protein BMEII0691 (614 aa).

A signal peptide spans 1–28 (MNRFIAFFRSVFLIGLVATAFGALPARA).

The protein belongs to the bacterial solute-binding protein 5 family.

Its subcellular location is the periplasm. The sequence is that of Putative binding protein BMEII0691 from Brucella melitensis biotype 1 (strain ATCC 23456 / CCUG 17765 / NCTC 10094 / 16M).